Reading from the N-terminus, the 581-residue chain is Proline--tRNA ligase (581 aa).

Belongs to the class-II aminoacyl-tRNA synthetase family. ProS type 1 subfamily. Homodimer.

It localises to the cytoplasm. The enzyme catalyses tRNA(Pro) + L-proline + ATP = L-prolyl-tRNA(Pro) + AMP + diphosphate. Functionally, catalyzes the attachment of proline to tRNA(Pro) in a two-step reaction: proline is first activated by ATP to form Pro-AMP and then transferred to the acceptor end of tRNA(Pro). As ProRS can inadvertently accommodate and process non-cognate amino acids such as alanine and cysteine, to avoid such errors it has two additional distinct editing activities against alanine. One activity is designated as 'pretransfer' editing and involves the tRNA(Pro)-independent hydrolysis of activated Ala-AMP. The other activity is designated 'posttransfer' editing and involves deacylation of mischarged Ala-tRNA(Pro). The misacylated Cys-tRNA(Pro) is not edited by ProRS. This Acidovorax ebreus (strain TPSY) (Diaphorobacter sp. (strain TPSY)) protein is Proline--tRNA ligase.